The following is a 1099-amino-acid chain: Sodium/potassium/calcium exchanger 1 (1099 aa).

Residues 1–452 (MGKLIRMGPQ…DLFSVEERRQ (452 aa)) are Extracellular-facing. Residues 123 to 134 (PTTTKNNYSPTA) are compositionally biased toward polar residues. 3 disordered regions span residues 123–150 (PTTT…SSRT), 169–199 (TPRG…RVGT), and 284–304 (PRRV…KSNP). The N-linked (GlcNAc...) asparagine glycan is linked to N290. The chain crosses the membrane as a helical span at residues 453 to 473 (GWVVLHVFGMMYVFVALAIVC). Topologically, residues 474 to 497 (DEYFVPALGVITDKLQISEDVAGA) are cytoplasmic. The Alpha-1 repeat unit spans residues 494–534 (VAGATFMAAGGSAPELFTSLIGVFISHSNVGIGTIVGSAVF). A helical transmembrane segment spans residues 498–518 (TFMAAGGSAPELFTSLIGVFI). Residues 519–522 (SHSN) lie on the Extracellular side of the membrane. The chain crosses the membrane as a helical span at residues 523–543 (VGIGTIVGSAVFNILFVIGTC). Residues 544–563 (SLFSREILNLTWWPLFRDVS) lie on the Cytoplasmic side of the membrane. Residues 564 to 584 (FYILDLIMLILFFLDSLIAWW) form a helical membrane-spanning segment. Residue E585 is a topological domain, extracellular. A helical membrane pass occupies residues 586–606 (SLLLLLAYAFYVFTMKWNKHI). The Cytoplasmic portion of the chain corresponds to 607 to 907 (EVWVKEQLSR…SLDWPETRQK (301 aa)). S658 bears the Phosphoserine mark. The tract at residues 690–901 (EKEEESLNQG…GNEEPLSLDW (212 aa)) is disordered. Position 724 is a phosphothreonine (T724). The span at 757 to 769 (PGEEGETAGEGET) shows a compositional bias: acidic residues. 2 stretches are compositionally biased toward basic and acidic residues: residues 813–825 (EIHA…KGNE) and 835–849 (AENH…KGVE). Residues 857-892 (GDSEEEEEEEEEQEEEEEEEEQEEEEEEEEEEEEKG) show a composition bias toward acidic residues. Residues 908 to 928 (QAIYLFLLPIVFPLWLTVPDV) form a helical membrane-spanning segment. Over 929–935 (RRQESRK) the chain is Extracellular. The chain crosses the membrane as a helical span at residues 936 to 956 (FFVFTFLGSIMWIAMFSYLMV). The Cytoplasmic portion of the chain corresponds to 957 to 971 (WWAHQVGETIGISEE). Residues 972–992 (IMGLTILAAGTSIPDLITSVI) traverse the membrane as a helical segment. One copy of the Alpha-2 repeat lies at 979–1010 (AAGTSIPDLITSVIVARKGLGDMAVSSSVGSN). Over 993–1010 (VARKGLGDMAVSSSVGSN) the chain is Extracellular. A helical membrane pass occupies residues 1011 to 1031 (IFDITVGLPVPWLLFSLINGL). Over 1032-1039 (QPVPVSSN) the chain is Cytoplasmic. Residues 1040 to 1060 (GLFCAIVLLFLMLLFVISSIA) traverse the membrane as a helical segment. Residues 1061–1068 (SCKWRMNK) lie on the Extracellular side of the membrane. Residues 1069 to 1089 (ILGFTMFLLYFVFLIISVMLE) traverse the membrane as a helical segment. At 1090-1099 (DRIISCPVSV) the chain is on the cytoplasmic side.

The protein belongs to the Ca(2+):cation antiporter (CaCA) (TC 2.A.19) family. SLC24A subfamily. The uncleaved signal sequence is required for efficient membrane targeting and proper membrane integration. In terms of tissue distribution, expressed in the retina, particularly in the inner segment, outer and inner nuclear layers, and ganglion cell layer.

It is found in the cell membrane. The catalysed reaction is Ca(2+)(out) + K(+)(out) + 4 Na(+)(in) = Ca(2+)(in) + K(+)(in) + 4 Na(+)(out). Its function is as follows. Calcium, potassium:sodium antiporter that transports 1 Ca(2+) and 1 K(+) in exchange for 4 Na(+). Critical component of the visual transduction cascade, controlling the calcium concentration of outer segments during light and darkness. Light causes a rapid lowering of cytosolic free calcium in the outer segment of both retinal rod and cone photoreceptors and the light-induced lowering of calcium is caused by extrusion via this protein which plays a key role in the process of light adaptation. This is Sodium/potassium/calcium exchanger 1 from Homo sapiens (Human).